Here is a 346-residue protein sequence, read N- to C-terminus: Selenide, water dikinase (346 aa).

The active site involves selenocysteine 17. Residue selenocysteine 17 is a non-standard amino acid, selenocysteine. ATP contacts are provided by residues lysine 20 and 47–49 (TSD). Residue aspartate 50 participates in Mg(2+) binding. ATP-binding positions include aspartate 67, aspartate 90, and 138–140 (GHT). A Mg(2+)-binding site is contributed by aspartate 90. Aspartate 226 provides a ligand contact to Mg(2+).

The protein belongs to the selenophosphate synthase 1 family. Class I subfamily. In terms of assembly, homodimer. The cofactor is Mg(2+).

It catalyses the reaction hydrogenselenide + ATP + H2O = selenophosphate + AMP + phosphate + 2 H(+). Functionally, synthesizes selenophosphate from selenide and ATP. The sequence is that of Selenide, water dikinase from Trichlorobacter lovleyi (strain ATCC BAA-1151 / DSM 17278 / SZ) (Geobacter lovleyi).